A 366-amino-acid chain; its full sequence is UDP-N-acetylglucosamine--N-acetylmuramyl-(pentapeptide) pyrophosphoryl-undecaprenol N-acetylglucosamine transferase (366 aa).

Residues 14 to 16 (TGG), Asn-128, Arg-169, Ser-201, Ile-251, and Gln-296 contribute to the UDP-N-acetyl-alpha-D-glucosamine site.

The protein belongs to the glycosyltransferase 28 family. MurG subfamily.

It is found in the cell inner membrane. It catalyses the reaction di-trans,octa-cis-undecaprenyl diphospho-N-acetyl-alpha-D-muramoyl-L-alanyl-D-glutamyl-meso-2,6-diaminopimeloyl-D-alanyl-D-alanine + UDP-N-acetyl-alpha-D-glucosamine = di-trans,octa-cis-undecaprenyl diphospho-[N-acetyl-alpha-D-glucosaminyl-(1-&gt;4)]-N-acetyl-alpha-D-muramoyl-L-alanyl-D-glutamyl-meso-2,6-diaminopimeloyl-D-alanyl-D-alanine + UDP + H(+). The protein operates within cell wall biogenesis; peptidoglycan biosynthesis. In terms of biological role, cell wall formation. Catalyzes the transfer of a GlcNAc subunit on undecaprenyl-pyrophosphoryl-MurNAc-pentapeptide (lipid intermediate I) to form undecaprenyl-pyrophosphoryl-MurNAc-(pentapeptide)GlcNAc (lipid intermediate II). The protein is UDP-N-acetylglucosamine--N-acetylmuramyl-(pentapeptide) pyrophosphoryl-undecaprenol N-acetylglucosamine transferase of Christiangramia forsetii (strain DSM 17595 / CGMCC 1.15422 / KT0803) (Gramella forsetii).